Consider the following 428-residue polypeptide: Adenylosuccinate synthetase (428 aa).

Residues 12–18 and 40–42 contribute to the GTP site; these read GDEGKGK and GHT. The Proton acceptor role is filled by D13. Positions 13 and 40 each coordinate Mg(2+). Residues 13–16, 38–41, T128, R142, Q223, T238, and R302 each bind IMP; these read DEGK and NAGH. The active-site Proton donor is the H41. Residue 298-304 coordinates substrate; the sequence is VTTGRPR. GTP contacts are provided by residues R304, 330–332, and 412–414; these read KLD and GTG.

It belongs to the adenylosuccinate synthetase family. As to quaternary structure, homodimer. Mg(2+) serves as cofactor.

The protein localises to the cytoplasm. The catalysed reaction is IMP + L-aspartate + GTP = N(6)-(1,2-dicarboxyethyl)-AMP + GDP + phosphate + 2 H(+). Its pathway is purine metabolism; AMP biosynthesis via de novo pathway; AMP from IMP: step 1/2. Plays an important role in the de novo pathway of purine nucleotide biosynthesis. Catalyzes the first committed step in the biosynthesis of AMP from IMP. The protein is Adenylosuccinate synthetase of Bifidobacterium animalis subsp. lactis (strain AD011).